Consider the following 503-residue polypeptide: 3-octaprenyl-4-hydroxybenzoate carboxy-lyase (503 aa).

A Mn(2+)-binding site is contributed by Asn-176. Prenylated FMN is bound by residues 179–181 (IYR), 193–195 (RWL), and 198–199 (RG). Glu-242 lines the Mn(2+) pocket. The active-site Proton donor is the Asp-303.

Belongs to the UbiD family. As to quaternary structure, homohexamer. Requires prenylated FMN as cofactor. It depends on Mn(2+) as a cofactor.

Its subcellular location is the cell membrane. It carries out the reaction a 4-hydroxy-3-(all-trans-polyprenyl)benzoate + H(+) = a 2-(all-trans-polyprenyl)phenol + CO2. It participates in cofactor biosynthesis; ubiquinone biosynthesis. Functionally, catalyzes the decarboxylation of 3-octaprenyl-4-hydroxy benzoate to 2-octaprenylphenol, an intermediate step in ubiquinone biosynthesis. The sequence is that of 3-octaprenyl-4-hydroxybenzoate carboxy-lyase from Ralstonia nicotianae (strain ATCC BAA-1114 / GMI1000) (Ralstonia solanacearum).